The sequence spans 44 residues: Entericidin A (44 aa).

An N-terminal signal peptide occupies residues 1–21 (MMKRLLGLVMLLLFTCTLLTG). A lipid anchor (N-palmitoyl cysteine) is attached at Cys-22. Cys-22 carries S-diacylglycerol cysteine lipidation.

Belongs to the EcnA/EcnB lipoprotein family.

Its subcellular location is the cell membrane. Acts as antidote to the effect of entericidin B. This Citrobacter freundii protein is Entericidin A (ecnA).